The sequence spans 381 residues: Protein YkfC (381 aa).

One can recognise a Reverse transcriptase domain in the interval 72–337 (LRDELLSGHY…DGFIFLGHRL (266 aa)). Residues aspartate 166, aspartate 284, and aspartate 285 each coordinate Mg(2+).

It belongs to the bacterial reverse transcriptase family.

The sequence is that of Protein YkfC (ykfC) from Escherichia coli (strain K12).